The primary structure comprises 430 residues: tRNA-2-methylthio-N(6)-dimethylallyladenosine synthase (430 aa).

The region spanning 2–111 (KKIHIKTYGC…IPQAVERAIN (110 aa)) is the MTTase N-terminal domain. 6 residues coordinate [4Fe-4S] cluster: cysteine 11, cysteine 47, cysteine 76, cysteine 147, cysteine 151, and cysteine 154. In terms of domain architecture, Radical SAM core spans 133 to 364 (RNSKHHAWIT…LNLQKEINKQ (232 aa)). Positions 367 to 428 (ENYLNKTVEI…AGPLYGDIIK (62 aa)) constitute a TRAM domain.

It belongs to the methylthiotransferase family. MiaB subfamily. As to quaternary structure, monomer. It depends on [4Fe-4S] cluster as a cofactor.

Its subcellular location is the cytoplasm. It catalyses the reaction N(6)-dimethylallyladenosine(37) in tRNA + (sulfur carrier)-SH + AH2 + 2 S-adenosyl-L-methionine = 2-methylsulfanyl-N(6)-dimethylallyladenosine(37) in tRNA + (sulfur carrier)-H + 5'-deoxyadenosine + L-methionine + A + S-adenosyl-L-homocysteine + 2 H(+). In terms of biological role, catalyzes the methylthiolation of N6-(dimethylallyl)adenosine (i(6)A), leading to the formation of 2-methylthio-N6-(dimethylallyl)adenosine (ms(2)i(6)A) at position 37 in tRNAs that read codons beginning with uridine. The protein is tRNA-2-methylthio-N(6)-dimethylallyladenosine synthase of Thermosipho melanesiensis (strain DSM 12029 / CIP 104789 / BI429).